The following is a 298-amino-acid chain: DNA repair protein RecO (298 aa).

It belongs to the RecO family.

In terms of biological role, involved in DNA repair and RecF pathway recombination. The polypeptide is DNA repair protein RecO (Cupriavidus metallidurans (strain ATCC 43123 / DSM 2839 / NBRC 102507 / CH34) (Ralstonia metallidurans)).